The primary structure comprises 415 residues: Gamma-glutamyl phosphate reductase (415 aa).

The protein belongs to the gamma-glutamyl phosphate reductase family.

The protein localises to the cytoplasm. It catalyses the reaction L-glutamate 5-semialdehyde + phosphate + NADP(+) = L-glutamyl 5-phosphate + NADPH + H(+). The protein operates within amino-acid biosynthesis; L-proline biosynthesis; L-glutamate 5-semialdehyde from L-glutamate: step 2/2. In terms of biological role, catalyzes the NADPH-dependent reduction of L-glutamate 5-phosphate into L-glutamate 5-semialdehyde and phosphate. The product spontaneously undergoes cyclization to form 1-pyrroline-5-carboxylate. The protein is Gamma-glutamyl phosphate reductase of Oceanobacillus iheyensis (strain DSM 14371 / CIP 107618 / JCM 11309 / KCTC 3954 / HTE831).